The sequence spans 309 residues: MYKQANPDLWQGRIDSETDESQFRHFQTIELKDINETKVDKKAGTGILGYAVDKGVELNNGRVGAQEGPDAVRKAFGNLSVLTPCPVYDYGNVYHDHDHLIDTQEEYAELAAKMFQNHNYSFLVGGGHDIAYAQYLAMRKAYPDSSIGVINIDAHFDTRKADSSTSGTSFRQILEGDDNADYFVLGIQSASNTKSLFDYAEERGIEYVTADEILHEISPTIKDKIDHFINRHDVIMFTICMDVVDSAFAPGVSAPAVNGLTPHIILELSRRIVGHPKLVSISVAETNPLYDMDNRTAKLVALFLHNFIH.

Residues histidine 128, aspartate 153, histidine 155, aspartate 157, cysteine 240, and aspartate 242 each coordinate Mn(2+).

Belongs to the arginase family. Mn(2+) is required as a cofactor.

The enzyme catalyses N-formimidoyl-L-glutamate + H2O = formamide + L-glutamate. The protein operates within amino-acid degradation; L-histidine degradation into L-glutamate; L-glutamate from N-formimidoyl-L-glutamate (hydrolase route): step 1/1. Functionally, catalyzes the conversion of N-formimidoyl-L-glutamate to L-glutamate and formamide. This Staphylococcus carnosus (strain TM300) protein is Formimidoylglutamase.